The primary structure comprises 171 residues: Probable deoxyuridine 5'-triphosphate nucleotidohydrolase (171 aa).

Belongs to the dCTP deaminase family. Archaeal dUTPase subfamily.

It carries out the reaction dUTP + H2O = dUMP + diphosphate + H(+). It functions in the pathway pyrimidine metabolism; dUMP biosynthesis; dUMP from dCTP (dUTP route): step 2/2. In terms of biological role, this enzyme is involved in nucleotide metabolism: it produces dUMP, the immediate precursor of thymidine nucleotides and it decreases the intracellular concentration of dUTP so that uracil cannot be incorporated into DNA. The sequence is that of Probable deoxyuridine 5'-triphosphate nucleotidohydrolase from Methanosarcina barkeri (strain Fusaro / DSM 804).